Reading from the N-terminus, the 524-residue chain is Probable beta-1,4-xylosyltransferase IRX14 (524 aa).

Residues 1-51 (MMKSLLPQSQLRRSAAAASAARSSGGGAGSGGADGAGSDGGAGGRAPATST) lie on the Cytoplasmic side of the membrane. A disordered region spans residues 21–41 (ARSSGGGAGSGGADGAGSDGG). Residues 24–41 (SGGGAGSGGADGAGSDGG) are compositionally biased toward gly residues. Residues 52 to 71 (FWFLLHALCCLVSLFLGFRF) form a helical; Signal-anchor for type II membrane protein membrane-spanning segment. The Lumenal segment spans residues 72 to 524 (SRLLFFLLFS…SRSTTKRKEN (453 aa)). Asn-132, Asn-135, Asn-240, and Asn-353 each carry an N-linked (GlcNAc...) asparagine glycan. Residues 492-524 (AELVDSKQDQEGRRLSRTDRSSRSRSTTKRKEN) form a disordered region. Positions 495-513 (VDSKQDQEGRRLSRTDRSS) are enriched in basic and acidic residues.

This sequence belongs to the glycosyltransferase 43 family.

It is found in the golgi apparatus membrane. Its function is as follows. Probable beta-1,4-xylosyltransferase involved in xylan biosynthesis in cell walls. The sequence is that of Probable beta-1,4-xylosyltransferase IRX14 from Oryza sativa subsp. japonica (Rice).